The chain runs to 216 residues: Small ribosomal subunit protein uS3 (216 aa).

The 69-residue stretch at 38 to 106 folds into the KH type-2 domain; the sequence is IRGYLKKKLY…EIIINILEVR (69 aa).

It belongs to the universal ribosomal protein uS3 family. In terms of assembly, part of the 30S ribosomal subunit. Forms a tight complex with proteins S10 and S14.

In terms of biological role, binds the lower part of the 30S subunit head. Binds mRNA in the 70S ribosome, positioning it for translation. This chain is Small ribosomal subunit protein uS3, found in Syntrophus aciditrophicus (strain SB).